A 656-amino-acid chain; its full sequence is Rab proteins geranylgeranyltransferase component A 2 (656 aa).

Disordered regions lie at residues 188 to 209 (MHTV…EDKA) and 609 to 656 (PPPN…HLQN). Residues 639 to 656 (ESSEESKNLESPEKHLQN) show a composition bias toward basic and acidic residues. S649 bears the Phosphoserine mark.

The protein belongs to the Rab GDI family. As to quaternary structure, monomer. Heterotrimer composed of RABGGTA, RABGGTB and CHML; within this trimer, RABGGTA and RABGGTB form the catalytic component B, while CHML (component A) mediates Rab protein binding. Interacts with RAB1A, RAB7A and RAB27A, but has much lower affinity for RAB1A, RAB7A and RAB27A than CHM. Interacts with the non-phosphorylated forms of RAB3A, RAB3B, RAB3C, RAB3D, RAB5B, RAB5C, RAB8A, RAB8B, RAB10, RAB12, RAB35, and RAB43.

It is found in the cytoplasm. Its subcellular location is the cytosol. Substrate-binding subunit (component A) of the Rab geranylgeranyltransferase (GGTase) complex. Binds unprenylated Rab proteins and presents the substrate peptide to the catalytic component B. The component A is thought to be regenerated by transferring its prenylated Rab back to the donor membrane. Less effective than CHM in supporting prenylation of Rab3 family. This Homo sapiens (Human) protein is Rab proteins geranylgeranyltransferase component A 2 (CHML).